The chain runs to 167 residues: Thioredoxin-like protein HI_1115 (167 aa).

A helical transmembrane segment spans residues 10 to 27 (GLSLFLTFIVITSILDFV). One can recognise a Thioredoxin domain in the interval 30 to 167 (PVVPEEINKI…VRLFFAEFFG (138 aa)). A disulfide bond links C69 and C72.

The protein belongs to the thioredoxin family.

It is found in the cell membrane. The polypeptide is Thioredoxin-like protein HI_1115 (Haemophilus influenzae (strain ATCC 51907 / DSM 11121 / KW20 / Rd)).